Consider the following 1140-residue polypeptide: Condensin-2 complex subunit G2 (1140 aa).

The stretch at 460-493 (LLPALKSSLHDSSEKVRVAFVGMLLKIKAARAAK) is one HEAT repeat.

Component of the condensin-2 complex, which contains the smc2 and smc4 heterodimer, and three non SMC subunits that probably regulate the complex: ncaph2, ncapd3 and ncapg2.

The protein resides in the nucleus. Regulatory subunit of the condensin-2 complex, a complex which establishes mitotic chromosome architecture and is involved in physical rigidity of the chromatid axis. Plays a role in the embryonic development of the head and kidney structures. The chain is Condensin-2 complex subunit G2 from Danio rerio (Zebrafish).